A 377-amino-acid polypeptide reads, in one-letter code: Metallo-hydrolase mfmC (377 aa).

His-126, His-128, Asp-130, His-131, His-209, and Asp-233 together coordinate Zn(2+).

This sequence belongs to the metallo-beta-lactamase superfamily.

The protein operates within secondary metabolite biosynthesis; terpenoid biosynthesis. Metallo-hydrolase; part of the gene cluster that mediates the biosynthesis of the phthalide-terpenoid hybrid 11'-O-desmethylfendlerol. Within the pathway, mfma and mfmC act together to convert 3,5-dimethylorsellinic acid (DMOA) into the phthalide 5,7-dihydroxy-4-(hydroxymethyl)-6-methylphthalide. The biosynthesis of 11'-O-desmethylfendlerol begins with the NR-PKS mfmB that forms 3,5-dimethylorsellinic acid (DMOA), which is then transformed into the phthalide 5,7-dihydroxy-4-(hydroxymethyl)-6-methylphthalide by the cytochrome P450 monooxygenase mfmA and the hydrolase mfmC. Subsequently, the methyltransferase mfmE catalyzes 7-O-methylation to yield 5-hydroxy-4-(hydroxymethyl)-7-methoxy-6-methylphthalide, which undergoes C-3 hydroxylation by the cytochrome P450 monooxygenase mfmF. The resultant cyclopolic acid (2,5-dihydroxy-4-(hydroxymethyl)-7-methoxy-6-methylphthalide) is then farnesylated by the DMATS-type prenyltransferase mfmD to afford 5-O-farnesylcyclopolic acid. Finally, the Pyr4-family terpene cyclase mfmH cyclizes the farnesyl moiety of 5-O-farnesylcyclopolic acid into a drimane-like structure, thus completing the biosynthesis of 11'-O-desmethylfendlerol. The sequence is that of Metallo-hydrolase mfmC from Annulohypoxylon moriforme (Filamentous fungus).